A 560-amino-acid chain; its full sequence is Kinesin light chain 1 (560 aa).

Residues 27–156 (KTKQVIQGLE…HLEFMNQLKK (130 aa)) are a coiled coil. Over residues 156–176 (KYDDDISPSEDKDSDSSKEPL) the composition is skewed to basic and acidic residues. The disordered stretch occupies residues 156 to 203 (KYDDDISPSEDKDSDSSKEPLDDLFPNDEDDPGQGIQQQHSSAAAAAQ). S162 is modified (phosphoserine). Residues 188–203 (GQGIQQQHSSAAAAAQ) are compositionally biased toward low complexity. TPR repeat units lie at residues 213 to 246 (LRTLHNLVIQYASQGRYEVAVPLCKQALEDLEKT), 255 to 288 (ATMLNILALVYRDQNKYKDAANLLNDALAIREKT), 297 to 330 (AATLNNLAVLYGKRGKYKEAEPLCKRALEIREKV), 339 to 372 (AKQLNNLALLCQNQGKYEEVEYYYQRALEIYQTK), and 381 to 414 (AKTKNNLASCYLKQGKFKQAETLYKEILTRAHER). Residue Y449 is modified to Phosphotyrosine. Phosphoserine is present on S460. The stretch at 464–497 (TTTLKNLGALYRRQGKFEAAETLEEAALRSRKQG) is one TPR 6 repeat. A phosphoserine mark is found at S521 and S524.

The protein belongs to the kinesin light chain family. As to quaternary structure, oligomeric complex composed of two heavy chains and two light chains. Interacts with SPAG9. Interacts with ATCAY; may link mitochondria to KLC1 and regulate mitochondria localization into neuron projections. Interacts (via TPR repeats) with TOR1A; the interaction associates TOR1A with the kinesin oligomeric complex. Interacts with BORCS5. Interacts with MAPK8IP3/JIP3 and NTRK2/TRKB; interaction with NTRK2/TRKB is mediated by MAPK8IP3/JIP3. Interacts with CLSTN1; phosphorylation at Ser-460 inhibits interaction with CLSTN1. Post-translationally, phosphorylation at Ser-460 by ERK inhibits interaction with CLSTN1 and localization to cytoplasmic vesicles. In terms of tissue distribution, expressed in brain (at protein level).

It is found in the cell projection. The protein resides in the growth cone. The protein localises to the cytoplasmic vesicle. It localises to the cytoplasm. Its subcellular location is the cytoskeleton. Kinesin is a microtubule-associated force-producing protein that may play a role in organelle transport. The light chain may function in coupling of cargo to the heavy chain or in the modulation of its ATPase activity. The chain is Kinesin light chain 1 (Klc1) from Rattus norvegicus (Rat).